A 448-amino-acid polypeptide reads, in one-letter code: NADP-specific glutamate dehydrogenase (448 aa).

Lys88, Gln109, and Lys112 together coordinate substrate. Lys124 acts as the Proton donor in catalysis. Gly163 provides a ligand contact to substrate. 2 residues coordinate NADP(+): Thr207 and Asn238. Ser375 serves as a coordination point for substrate.

The protein belongs to the Glu/Leu/Phe/Val dehydrogenases family. As to quaternary structure, homohexamer.

It catalyses the reaction L-glutamate + NADP(+) + H2O = 2-oxoglutarate + NH4(+) + NADPH + H(+). Its function is as follows. Catalyzes the reversible oxidative deamination of glutamate to alpha-ketoglutarate and ammonia. This chain is NADP-specific glutamate dehydrogenase (gdhA), found in Psychrobacter sp. (strain TAD1).